The chain runs to 379 residues: Diaminopimelate decarboxylase (379 aa).

K48 is subject to N6-(pyridoxal phosphate)lysine. Pyridoxal 5'-phosphate contacts are provided by residues G214 and 242-245 (EPGR). The substrate site is built by R245, R280, and Y284. C309 functions as the Proton donor in the catalytic mechanism. 2 residues coordinate substrate: E310 and Y338. Pyridoxal 5'-phosphate is bound at residue Y338.

The protein belongs to the Orn/Lys/Arg decarboxylase class-II family. LysA subfamily. As to quaternary structure, homodimer. Requires pyridoxal 5'-phosphate as cofactor.

The enzyme catalyses meso-2,6-diaminopimelate + H(+) = L-lysine + CO2. The protein operates within amino-acid biosynthesis; L-lysine biosynthesis via DAP pathway; L-lysine from DL-2,6-diaminopimelate: step 1/1. Functionally, specifically catalyzes the decarboxylation of meso-diaminopimelate (meso-DAP) to L-lysine. This Deinococcus radiodurans (strain ATCC 13939 / DSM 20539 / JCM 16871 / CCUG 27074 / LMG 4051 / NBRC 15346 / NCIMB 9279 / VKM B-1422 / R1) protein is Diaminopimelate decarboxylase.